A 731-amino-acid polypeptide reads, in one-letter code: E3 ubiquitin-protein ligase SMURF1 (731 aa).

Residues 1 to 120 (MSNPGTRRNG…TGYQRLDLCK (120 aa)) enclose the C2 domain. Ser-200 carries the phosphoserine modification. A disordered region spans residues 216–237 (EVRGPLQTPQNRPHGHQSPELP). WW domains are found at residues 234–267 (PELP…DPRI) and 280–313 (GPLP…DPRL). Glycyl lysine isopeptide (Lys-Gly) (interchain with G-Cter in ubiquitin) cross-links involve residues Lys-355 and Lys-357. Positions 394–731 (RPKDLKKRLM…VEETCGFAVE (338 aa)) constitute an HECT domain. Cys-699 serves as the catalytic Glycyl thioester intermediate.

As to quaternary structure, interacts with TRAF4. Interacts (via HECT domain) with FBXL15 (via LRR repeats). Interacts with SMAD7 and TGFBR1; SMAD7 recruits SMURF1 to TGFBR1 and regulates TGF-beta receptor degradation. Interacts with MAVS; the interaction is mediated by NDFIP1. Auto-ubiquitinated in presence of NDFIP1. Ubiquitinated by the SCF(FBXL15) complex at Lys-355 and Lys-357, leading to its degradation by the proteasome. Lys-357 is the primary ubiquitination site.

It localises to the cytoplasm. The protein resides in the cell membrane. It carries out the reaction S-ubiquitinyl-[E2 ubiquitin-conjugating enzyme]-L-cysteine + [acceptor protein]-L-lysine = [E2 ubiquitin-conjugating enzyme]-L-cysteine + N(6)-ubiquitinyl-[acceptor protein]-L-lysine.. It functions in the pathway protein modification; protein ubiquitination. Its function is as follows. E3 ubiquitin-protein ligase that acts as a negative regulator of BMP signaling pathway. Mediates ubiquitination and degradation of SMAD1 and SMAD5, 2 receptor-regulated SMADs specific for the BMP pathway. Promotes ubiquitination and subsequent proteasomal degradation of TRAF family members and RHOA. Promotes ubiquitination and subsequent proteasomal degradation of MAVS. Acts as an antagonist of TGF-beta signaling by ubiquitinating TGFBR1 and targeting it for degradation. Plays a role in dendrite formation by melanocytes. The chain is E3 ubiquitin-protein ligase SMURF1 (Smurf1) from Mus musculus (Mouse).